The chain runs to 548 residues: Rhodopsin kinase grk7-b (548 aa).

Serine 33 is subject to Phosphoserine; by PKA. Residues 53–172 (FEDICEQQPI…QTSLFFDRFV (120 aa)) enclose the RGS domain. The region spanning 187-446 (FYEFRTLGKG…NDDPRKHEFF (260 aa)) is the Protein kinase domain. ATP contacts are provided by residues 193-201 (LGKGGFGEV) and lysine 216. The active-site Proton acceptor is aspartate 312. Positions 447 to 512 (KSINFPRLEA…GVVPIAWQQE (66 aa)) constitute an AGC-kinase C-terminal domain. The disordered stretch occupies residues 520–548 (DELSDPNRKESAAGLEDEEQQKSKSCTLL). Position 545 is a cysteine methyl ester (cysteine 545). Cysteine 545 carries S-geranylgeranyl cysteine lipidation. The propeptide at 546-548 (TLL) is removed in mature form.

This sequence belongs to the protein kinase superfamily. AGC Ser/Thr protein kinase family. GPRK subfamily. In terms of processing, phosphorylation at Ser-33 is regulated by light and activated by cAMP. As to expression, expressed in the eyes (at protein level). Expressed in the eyes, the pineal gland and in the brain.

Its subcellular location is the membrane. It catalyses the reaction L-threonyl-[rhodopsin] + ATP = O-phospho-L-threonyl-[rhodopsin] + ADP + H(+). The catalysed reaction is L-seryl-[rhodopsin] + ATP = O-phospho-L-seryl-[rhodopsin] + ADP + H(+). In terms of biological role, retina-specific kinase involved in the shutoff of the photoresponse and adaptation to changing light conditions via cone opsin phosphorylation, including rhodopsin (RHO). This Danio rerio (Zebrafish) protein is Rhodopsin kinase grk7-b (grk7b).